The following is a 522-amino-acid chain: Nuclear pore glycoprotein p62 (522 aa).

S2 carries the N-acetylserine modification. A run of 5 repeats spans residues 6–7 (FG), 44–45 (FG), 76–77 (FG), 114–115 (FG), and 142–143 (FG). The segment at 6 to 143 (FGGTGAPTGG…GTAPTGFVFG (138 aa)) is 5 X 2 AA repeats of F-G. Over residues 169-179 (SGFNIGSAGNS) the composition is skewed to polar residues. 2 disordered regions span residues 169-215 (SGFN…ATIT) and 260-288 (APGAASGTSTTTSTAATATATTTSSSSTT). Low complexity-rich tracts occupy residues 180–215 (AQPTAPATLPFTPATPAATTAGATQPAAPTPTATIT) and 262–288 (GAASGTSTTTSTAATATATTTSSSSTT). Positions 328 to 458 (MTYAQLESLI…QDLKDIIEHL (131 aa)) are required for centrosome localization. Residues 328–458 (MTYAQLESLI…QDLKDIIEHL (131 aa)) are a coiled coil. T373 carries an O-linked (GlcNAc) threonine glycan. Phosphoserine occurs at positions 408 and 418. The O-linked (GlcNAc) serine glycan is linked to S468.

Belongs to the nucleoporin NSP1/NUP62 family. In terms of assembly, component of the p62 complex, a complex at least composed of NUP62, NUP54, and NUP58. Interacts with NUP88. Interacts with NUTF2. Interacts with HIKESHI. Interacts with OSBPL8. Interacts with CAPG. Interacts with SAS6 and TUBG1 at the centrosome. Interacts with MCM3AP isoform GANP. (Microbial infection) Interacts with Epstein-barr virus BGLF4; this interaction allows BGLF4 nuclear entry. In terms of processing, O-glycosylated. Contains about 10 N-acetylglucosamine side chain sites predicted for the entire protein, among which only one in the C-terminal. Post-translationally, the inner channel of the NPC has a different redox environment from the cytoplasm and allows the formation of interchain disulfide bonds between some nucleoporins, the significant increase of these linkages upon oxidative stress reduces the permeability of the NPC.

The protein resides in the nucleus. Its subcellular location is the nuclear pore complex. The protein localises to the cytoplasm. It is found in the cytoskeleton. It localises to the spindle pole. The protein resides in the nucleus envelope. Its subcellular location is the microtubule organizing center. The protein localises to the centrosome. In terms of biological role, essential component of the nuclear pore complex. The N-terminal is probably involved in nucleocytoplasmic transport. The C-terminal is involved in protein-protein interaction probably via coiled-coil formation, promotes its association with centrosomes and may function in anchorage of p62 to the pore complex. Plays a role in mitotic cell cycle progression by regulating centrosome segregation, centriole maturation and spindle orientation. It might be involved in protein recruitment to the centrosome after nuclear breakdown. This is Nuclear pore glycoprotein p62 (NUP62) from Homo sapiens (Human).